The sequence spans 592 residues: Tetrathionate sensor histidine kinase TtrS (592 aa).

Helical transmembrane passes span 11–31 (VLAA…NIGI) and 307–327 (VGGV…VMLL). The Histidine kinase domain occupies 364-581 (GFAHELNQPL…VVTIHFLHEN (218 aa)). Residue H367 is modified to Phosphohistidine; by autocatalysis.

In terms of processing, autophosphorylated.

The protein localises to the cell inner membrane. The enzyme catalyses ATP + protein L-histidine = ADP + protein N-phospho-L-histidine.. In terms of biological role, member of the two-component regulatory system TtrR/TtrS, which is required for synthesis of tetrathionate reductase. Probably functions as a sensor protein kinase which is autophosphorylated at a histidine residue in response to tetrathionate, and transfers its phosphate group to TtrR. During mice infection, the ability to use tetrathionate as an electron acceptor is a growth advantage for S.typhimurium over the competing microbiota in the lumen of the inflamed gut. The chain is Tetrathionate sensor histidine kinase TtrS (ttrS) from Salmonella typhimurium (strain LT2 / SGSC1412 / ATCC 700720).